Reading from the N-terminus, the 378-residue chain is Dual-specificity RNA methyltransferase RlmN (378 aa).

Catalysis depends on E95, which acts as the Proton acceptor. The Radical SAM core domain maps to 101-345; that stretch reads EETRGTLCVS…TTIRKTRGDD (245 aa). Cysteines 108 and 350 form a disulfide. The [4Fe-4S] cluster site is built by C115, C119, and C122. Residues 176–177, S208, 230–232, and N307 contribute to the S-adenosyl-L-methionine site; these read GE and SLH. The active-site S-methylcysteine intermediate is the C350.

It belongs to the radical SAM superfamily. RlmN family. [4Fe-4S] cluster is required as a cofactor.

It is found in the cytoplasm. The enzyme catalyses adenosine(2503) in 23S rRNA + 2 reduced [2Fe-2S]-[ferredoxin] + 2 S-adenosyl-L-methionine = 2-methyladenosine(2503) in 23S rRNA + 5'-deoxyadenosine + L-methionine + 2 oxidized [2Fe-2S]-[ferredoxin] + S-adenosyl-L-homocysteine. It carries out the reaction adenosine(37) in tRNA + 2 reduced [2Fe-2S]-[ferredoxin] + 2 S-adenosyl-L-methionine = 2-methyladenosine(37) in tRNA + 5'-deoxyadenosine + L-methionine + 2 oxidized [2Fe-2S]-[ferredoxin] + S-adenosyl-L-homocysteine. Its function is as follows. Specifically methylates position 2 of adenine 2503 in 23S rRNA and position 2 of adenine 37 in tRNAs. m2A2503 modification seems to play a crucial role in the proofreading step occurring at the peptidyl transferase center and thus would serve to optimize ribosomal fidelity. The protein is Dual-specificity RNA methyltransferase RlmN of Burkholderia thailandensis (strain ATCC 700388 / DSM 13276 / CCUG 48851 / CIP 106301 / E264).